The chain runs to 138 residues: Putative pre-16S rRNA nuclease (138 aa).

The protein belongs to the YqgF nuclease family.

Its subcellular location is the cytoplasm. Could be a nuclease involved in processing of the 5'-end of pre-16S rRNA. This Haemophilus ducreyi (strain 35000HP / ATCC 700724) protein is Putative pre-16S rRNA nuclease.